A 93-amino-acid polypeptide reads, in one-letter code: Insertion element ISR1 uncharacterized 11 kDa protein A1 (93 aa).

Disordered stretches follow at residues 14–33 (RRAR…QERR) and 68–93 (RRRA…SAGR).

This is Insertion element ISR1 uncharacterized 11 kDa protein A1 from Rhizobium sp.